Reading from the N-terminus, the 132-residue chain is MPTISQLIRQGREAARYKTASPALKSCPQRRGVCVRVYTTTPKKPNSALRKVCRVRLSNQMEVTSYIPGEGHNLQEHSVVLIRGGRVKDLPGVRYHVVRGTLDASGAAGPSSTNKATRNRKRSKYGVKRPKA.

The residue at position 89 (D89) is a 3-methylthioaspartic acid. The interval 101-132 is disordered; that stretch reads TLDASGAAGPSSTNKATRNRKRSKYGVKRPKA. Positions 117–132 are enriched in basic residues; the sequence is TRNRKRSKYGVKRPKA.

The protein belongs to the universal ribosomal protein uS12 family. In terms of assembly, part of the 30S ribosomal subunit. Contacts proteins S8 and S17. May interact with IF1 in the 30S initiation complex.

Its function is as follows. With S4 and S5 plays an important role in translational accuracy. In terms of biological role, interacts with and stabilizes bases of the 16S rRNA that are involved in tRNA selection in the A site and with the mRNA backbone. Located at the interface of the 30S and 50S subunits, it traverses the body of the 30S subunit contacting proteins on the other side and probably holding the rRNA structure together. The combined cluster of proteins S8, S12 and S17 appears to hold together the shoulder and platform of the 30S subunit. The polypeptide is Small ribosomal subunit protein uS12 (Sorangium cellulosum (strain So ce56) (Polyangium cellulosum (strain So ce56))).